A 684-amino-acid polypeptide reads, in one-letter code: Probable phosphoenolpyruvate synthase (684 aa).

Histidine 424 serves as the catalytic Tele-phosphohistidine intermediate. Residues arginine 517, arginine 564, and glutamate 661 each contribute to the substrate site. Glutamate 661 provides a ligand contact to Mg(2+).

This sequence belongs to the PEP-utilizing enzyme family. Mg(2+) is required as a cofactor.

It carries out the reaction pyruvate + ATP + H2O = phosphoenolpyruvate + AMP + phosphate + 2 H(+). Its pathway is carbohydrate biosynthesis; gluconeogenesis. In terms of biological role, catalyzes the phosphorylation of pyruvate to phosphoenolpyruvate. The protein is Probable phosphoenolpyruvate synthase (ppsA) of Methanothermobacter thermautotrophicus (strain ATCC 29096 / DSM 1053 / JCM 10044 / NBRC 100330 / Delta H) (Methanobacterium thermoautotrophicum).